Reading from the N-terminus, the 196-residue chain is Retinol-binding protein 4 (196 aa).

Positions 1–21 (MAYTWRALLLLALAFLGSSMA) are cleaved as a signal peptide. 3 cysteine pairs are disulfide-bonded: Cys-25/Cys-181, Cys-91/Cys-195, and Cys-141/Cys-150. Gln-119 is a substrate binding site.

This sequence belongs to the calycin superfamily. Lipocalin family. As to quaternary structure, interacts with TTR. Interaction with TTR prevents its loss by filtration through the kidney glomeruli. Interacts with STRA6.

Its subcellular location is the secreted. Retinol-binding protein that mediates retinol transport in blood plasma. Delivers retinol from the liver stores to the peripheral tissues. Transfers the bound all-trans retinol to STRA6, that then facilitates retinol transport across the cell membrane. The protein is Retinol-binding protein 4 (RBP4) of Gallus gallus (Chicken).